Consider the following 286-residue polypeptide: Spermidine/putrescine transport system permease protein PotB (286 aa).

Residues 1-13 are Cytoplasmic-facing; it reads MKIINNKFQKITV. A helical membrane pass occupies residues 14–33; it reads AIIFSWLIFFVLIPNLLVLA. Residues 34–71 are Periplasmic-facing; that stretch reads VSFLTRDGSNFYAFPITIENYTNLFNPLYAQVVWNSLS. Positions 66–274 constitute an ABC transmembrane type-1 domain; that stretch reads VWNSLSMSGI…MALLIFVYYR (209 aa). A helical transmembrane segment spans residues 72–91; sequence MSGIATIICLLIGYPFAFMM. Topologically, residues 92–100 are cytoplasmic; the sequence is SKIHPKYRP. A helical transmembrane segment spans residues 101-120; it reads LLLFLVVLPFWTNSLIRIYG. At 121–151 the chain is on the periplasmic side; the sequence is MKVFLGVKGILNTMLIDMGILSAPIRILNTE. A helical transmembrane segment spans residues 152-171; it reads IAVIIGLVYLLLPFMILPLY. Residues 172 to 199 are Cytoplasmic-facing; that stretch reads SAIEKLDNRLLEAARDLGANTFQRFFRV. A helical membrane pass occupies residues 200 to 219; the sequence is ILPLTMPGIIAGCLLVLLPA. The Periplasmic segment spans residues 220 to 252; it reads MGMFYVADLLGGAKVLLVGNVIKSEFLISRNWP. Residues 253-272 form a helical membrane-spanning segment; that stretch reads FGSAVSIGLTVLMALLIFVY. At 273–286 the chain is on the cytoplasmic side; it reads YRANKLLNRKVELE.

This sequence belongs to the binding-protein-dependent transport system permease family. CysTW subfamily.

It localises to the cell inner membrane. Its function is as follows. Required for the activity of the bacterial periplasmic transport system of putrescine and spermidine. This is Spermidine/putrescine transport system permease protein PotB (potB) from Haemophilus influenzae (strain ATCC 51907 / DSM 11121 / KW20 / Rd).